A 141-amino-acid polypeptide reads, in one-letter code: Large ribosomal subunit protein uL11 (141 aa).

Belongs to the universal ribosomal protein uL11 family. In terms of assembly, part of the ribosomal stalk of the 50S ribosomal subunit. Interacts with L10 and the large rRNA to form the base of the stalk. L10 forms an elongated spine to which L12 dimers bind in a sequential fashion forming a multimeric L10(L12)X complex. In terms of processing, one or more lysine residues are methylated.

Functionally, forms part of the ribosomal stalk which helps the ribosome interact with GTP-bound translation factors. This Syntrophomonas wolfei subsp. wolfei (strain DSM 2245B / Goettingen) protein is Large ribosomal subunit protein uL11.